We begin with the raw amino-acid sequence, 189 residues long: Transcription factor FapR (189 aa).

This sequence belongs to the FapR family.

Its function is as follows. Transcriptional factor involved in regulation of membrane lipid biosynthesis by repressing genes involved in fatty acid and phospholipid metabolism. This is Transcription factor FapR from Listeria monocytogenes serotype 4b (strain CLIP80459).